The following is a 233-amino-acid chain: MLISSVKVGEHFYFTLGVFKLHAQVFIVSFFVILILILFSVLGTNKMSQTPRGLQNFLEYVLEFIQDITKSQIGEPHYRDWVPFIGTLFLFIFVSNWSGALIPWKMIILPEGELSAPTNDINTTAALALLTSLAYFYAGISKKGLRYFSRYIKPTPILLPINILEDFTKPLSLSFRLFGNILADELVVSVLTLLVPLIVPLPVMMLGLFASSIQALIFATLAAAYIGEAIEEH.

4 consecutive transmembrane segments (helical) span residues Val82 to Ile102, Ile121 to Ser141, Leu177 to Val199, and Ser211 to Glu231.

Belongs to the ATPase A chain family. In terms of assembly, F-type ATPases have 2 components, CF(1) - the catalytic core - and CF(0) - the membrane proton channel. CF(1) has five subunits: alpha(3), beta(3), gamma(1), delta(1), epsilon(1). CF(0) has four main subunits: a, b, b' and c.

The protein localises to the plastid. The protein resides in the chloroplast thylakoid membrane. Functionally, key component of the proton channel; it plays a direct role in the translocation of protons across the membrane. This chain is ATP synthase subunit a, chloroplastic, found in Galdieria sulphuraria (Red alga).